The primary structure comprises 132 residues: Acid shock protein (132 aa).

A signal peptide spans 1-21; it reads MKKVLALVVAAAMGLSSAAFA. The span at 20–45 shows a compositional bias: low complexity; that stretch reads FAAETTTSSAAPATATATTTKAAPAK. A disordered region spans residues 20–132; it reads FAAETTTSSA…AAKPAAQPAA (113 aa). A propeptide spanning residues 22 to 90 is cleaved from the precursor; it reads AETTTSSAAP…TTAPVEQKAQ (69 aa). Residues 62 to 71 are compositionally biased toward basic residues; the sequence is AAKKHHKKAV. 2 stretches are compositionally biased toward low complexity: residues 76-90 and 100-109; these read AAPATTTAPVEQKAQ and AKPAVAQKAQ. The segment covering 110–119 has biased composition (basic residues); the sequence is AAKKHHKKAV.

It belongs to the Asr family. Proteolytic processing gives rise to the active protein.

The protein localises to the periplasm. Required for growth and/or survival at acidic conditions. The protein is Acid shock protein of Enterobacter sp. (strain 638).